Reading from the N-terminus, the 216-residue chain is Ras-related protein Rab-5C (216 aa).

The GTP site is built by Ser-30, Ala-31, Gly-33, Lys-34, Ser-35, Ser-36, His-47, Glu-48, Thr-53, Gly-79, Asn-134, Lys-135, Asp-137, Ala-165, and Lys-166. Ser-35 is a binding site for Mg(2+). 2 short sequence motifs (switch) span residues 45-57 (QFHE…IGAA) and 78-94 (AGQE…YRGA). Thr-53 contacts Mg(2+). A disordered region spans residues 184 to 216 (KNEPQNAPGGPGRNRVVDLQESSQPSRSQCCSN). Polar residues predominate over residues 203–216 (QESSQPSRSQCCSN). 2 S-geranylgeranyl cysteine lipidation sites follow: Cys-213 and Cys-214.

Belongs to the small GTPase superfamily. Rab family. Mg(2+) serves as cofactor. In terms of tissue distribution, detected in brain, ovary, rectum, small intestine, large intestine, liver, spleen, follicle and kidney (at protein level).

The protein localises to the cell membrane. The protein resides in the early endosome membrane. The enzyme catalyses GTP + H2O = GDP + phosphate + H(+). With respect to regulation, regulated by guanine nucleotide exchange factors (GEFs) which promote the exchange of bound GDP for free GTP. Regulated by GTPase activating proteins (GAPs) which increase the GTP hydrolysis activity. Inhibited by GDP dissociation inhibitors (GDIs). In terms of biological role, the small GTPases Rab are key regulators of intracellular membrane trafficking, from the formation of transport vesicles to their fusion with membranes. Rabs cycle between an inactive GDP-bound form and an active GTP-bound form that is able to recruit to membranes different sets of downstream effectors directly responsible for vesicle formation, movement, tethering and fusion. The protein is Ras-related protein Rab-5C (RAB5C) of Gallus gallus (Chicken).